Here is a 511-residue protein sequence, read N- to C-terminus: Exodeoxyribonuclease 7 large subunit (511 aa).

Belongs to the XseA family. As to quaternary structure, heterooligomer composed of large and small subunits.

It localises to the cytoplasm. The catalysed reaction is Exonucleolytic cleavage in either 5'- to 3'- or 3'- to 5'-direction to yield nucleoside 5'-phosphates.. Bidirectionally degrades single-stranded DNA into large acid-insoluble oligonucleotides, which are then degraded further into small acid-soluble oligonucleotides. The sequence is that of Exodeoxyribonuclease 7 large subunit from Brucella suis (strain ATCC 23445 / NCTC 10510).